We begin with the raw amino-acid sequence, 383 residues long: uncharacterized protein (383 aa).

Positions 12, 18, 21, and 88 each coordinate [4Fe-4S] cluster. Positions 219, 246, 267, and 314 each coordinate S-adenosyl-L-methionine. The active-site Nucleophile is Cys-341.

The protein belongs to the class I-like SAM-binding methyltransferase superfamily. RNA M5U methyltransferase family.

This is an uncharacterized protein from Protochlamydia amoebophila (strain UWE25).